The sequence spans 109 residues: Photosystem II reaction center Psb28 protein (109 aa).

It belongs to the Psb28 family. As to quaternary structure, part of the photosystem II complex.

The protein resides in the plastid. Its subcellular location is the chloroplast thylakoid membrane. The sequence is that of Photosystem II reaction center Psb28 protein from Cyanidioschyzon merolae (strain NIES-3377 / 10D) (Unicellular red alga).